Here is a 197-residue protein sequence, read N- to C-terminus: UPF0228 protein MA_3125 (197 aa).

It belongs to the UPF0228 family.

This Methanosarcina acetivorans (strain ATCC 35395 / DSM 2834 / JCM 12185 / C2A) protein is UPF0228 protein MA_3125.